The primary structure comprises 256 residues: MGASEELEYLKSLVSQLNGKIAAIEAKAKGSPSPTPAQQLRTILIGPPGAGKGTQAPKIRDEFCVCHLATGDMLREQVQQKTPLGIEAKKIMDAGGLVSDDIMVGIIKDQLENNKSCKNGFVLDGFPRTIPQAQKLDGMLAERKEKIDSVVQLLIDDQLLISRITGRLVHPASGRSYHKEFNPPKKRNVDDVTGEPLIQRSDDNVETLTKRLRTFHSQTGPVVDYYKVKGLWHGIDAAQSPSVVWENLRSIFVSKK.

49-54 (GAGKGT) is an ATP binding site. Residues 69–98 (ATGDMLREQVQQKTPLGIEAKKIMDAGGLV) are NMP. AMP-binding positions include T70, R75, 96-98 (GLV), 125-128 (GFPR), and Q132. Residues 166–203 (GRLVHPASGRSYHKEFNPPKKRNVDDVTGEPLIQRSDD) form an LID region. Residues R167 and 176–177 (SY) each bind ATP. 2 residues coordinate AMP: R200 and R211. Q239 is an ATP binding site.

This sequence belongs to the adenylate kinase family. AK2 subfamily. In terms of assembly, monomer.

The protein resides in the cytoplasm. Its subcellular location is the cytosol. The protein localises to the mitochondrion intermembrane space. The enzyme catalyses AMP + ATP = 2 ADP. Its function is as follows. Catalyzes the reversible transfer of the terminal phosphate group between ATP and AMP. Plays an important role in cellular energy homeostasis and in adenine nucleotide metabolism. Adenylate kinase activity is critical for regulation of the phosphate utilization and the AMP de novo biosynthesis pathways. The chain is Adenylate kinase from Laccaria bicolor (strain S238N-H82 / ATCC MYA-4686) (Bicoloured deceiver).